We begin with the raw amino-acid sequence, 308 residues long: Tryptophan 2,3-dioxygenase (308 aa).

Residues 1–37 (MKPPGDNAPAGCPFSGARAAQPAHEAPHVPGDAAGET) are disordered. Substrate is bound by residues 77-81 (FIIQH), Tyr139, and Arg143. Residue His266 participates in heme binding. Thr280 provides a ligand contact to substrate.

It belongs to the tryptophan 2,3-dioxygenase family. As to quaternary structure, homotetramer. Heme is required as a cofactor.

It carries out the reaction L-tryptophan + O2 = N-formyl-L-kynurenine. The protein operates within amino-acid degradation; L-tryptophan degradation via kynurenine pathway; L-kynurenine from L-tryptophan: step 1/2. Heme-dependent dioxygenase that catalyzes the oxidative cleavage of the L-tryptophan (L-Trp) pyrrole ring and converts L-tryptophan to N-formyl-L-kynurenine. Catalyzes the oxidative cleavage of the indole moiety. This Burkholderia ambifaria (strain MC40-6) protein is Tryptophan 2,3-dioxygenase.